A 452-amino-acid chain; its full sequence is Pup--protein ligase (452 aa).

Glutamate 9 is a binding site for Mg(2+). Arginine 53 provides a ligand contact to ATP. Residue tyrosine 55 participates in Mg(2+) binding. The active-site Proton acceptor is the aspartate 57. Glutamate 63 serves as a coordination point for Mg(2+). Positions 66 and 419 each coordinate ATP.

Belongs to the Pup ligase/Pup deamidase family. Pup-conjugating enzyme subfamily.

It carries out the reaction ATP + [prokaryotic ubiquitin-like protein]-L-glutamate + [protein]-L-lysine = ADP + phosphate + N(6)-([prokaryotic ubiquitin-like protein]-gamma-L-glutamyl)-[protein]-L-lysine.. The protein operates within protein degradation; proteasomal Pup-dependent pathway. Its pathway is protein modification; protein pupylation. Catalyzes the covalent attachment of the prokaryotic ubiquitin-like protein modifier Pup to the proteasomal substrate proteins, thereby targeting them for proteasomal degradation. This tagging system is termed pupylation. The ligation reaction involves the side-chain carboxylate of the C-terminal glutamate of Pup and the side-chain amino group of a substrate lysine. The sequence is that of Pup--protein ligase from Parafrankia sp. (strain EAN1pec).